We begin with the raw amino-acid sequence, 169 residues long: Ureidoglycolate lyase (169 aa).

Belongs to the ureidoglycolate lyase family. As to quaternary structure, homodimer. It depends on Ni(2+) as a cofactor.

It carries out the reaction (S)-ureidoglycolate = urea + glyoxylate. It participates in nitrogen metabolism; (S)-allantoin degradation. Its function is as follows. Catalyzes the catabolism of the allantoin degradation intermediate (S)-ureidoglycolate, generating urea and glyoxylate. Involved in the utilization of allantoin as nitrogen source. In Brucella anthropi (strain ATCC 49188 / DSM 6882 / CCUG 24695 / JCM 21032 / LMG 3331 / NBRC 15819 / NCTC 12168 / Alc 37) (Ochrobactrum anthropi), this protein is Ureidoglycolate lyase.